We begin with the raw amino-acid sequence, 122 residues long: Large ribosomal subunit protein uL14 (122 aa).

This sequence belongs to the universal ribosomal protein uL14 family. As to quaternary structure, part of the 50S ribosomal subunit. Forms a cluster with proteins L3 and L19. In the 70S ribosome, L14 and L19 interact and together make contacts with the 16S rRNA in bridges B5 and B8.

Binds to 23S rRNA. Forms part of two intersubunit bridges in the 70S ribosome. The chain is Large ribosomal subunit protein uL14 from Ruminiclostridium cellulolyticum (strain ATCC 35319 / DSM 5812 / JCM 6584 / H10) (Clostridium cellulolyticum).